A 478-amino-acid chain; its full sequence is Serine carboxypeptidase-like 33 (478 aa).

Positions 1–33 (MNLTLPMKKQKFLLIISLLILLSLLHQDYHIEA) are cleaved as a signal peptide. 3 disulfides stabilise this stretch: cysteine 95–cysteine 361, cysteine 257–cysteine 268, and cysteine 292–cysteine 330. N-linked (GlcNAc...) asparagine glycans are attached at residues asparagine 114 and asparagine 146. Serine 188 is a catalytic residue. 3 N-linked (GlcNAc...) asparagine glycosylation sites follow: asparagine 263, asparagine 295, and asparagine 362. Residues aspartate 398 and histidine 451 contribute to the active site.

This sequence belongs to the peptidase S10 family. Expressed in senescent leaves and flowers.

It localises to the secreted. Functionally, probable carboxypeptidase. This chain is Serine carboxypeptidase-like 33 (SCPL33), found in Arabidopsis thaliana (Mouse-ear cress).